A 486-amino-acid polypeptide reads, in one-letter code: Monocarboxylate transporter 12 (486 aa).

At 1–9 (MTKITRVGS) the chain is on the cytoplasmic side. Helical transmembrane passes span 10 to 30 (ASPP…LVTI), 58 to 78 (AWIH…GSVV), 86 to 106 (AGIM…SFAT), 115 to 135 (LGVL…AMVG), 148 to 168 (IAMS…QLLI), and 177 to 197 (LLIL…MRPI). Positions 201 to 220 (EDPSGPEKSHDRDAQREDCK) are enriched in basic and acidic residues. The interval 201–221 (EDPSGPEKSHDRDAQREDCKQ) is disordered. A run of 6 helical transmembrane segments spans residues 253–273 (FVVL…LFVY), 289–309 (AFLM…FGWL), 320–340 (YVCY…LPML), 353–373 (FGYF…EIVG), 383–403 (VVYF…GWLV), and 410–430 (TAAF…LGFA). Over 431 to 486 (KIAKRMKRTQVPFLVKDSDPKLHLWTNGSVAYSIAKELDQKDEESLAKARTGCNLT) the chain is Cytoplasmic.

This sequence belongs to the major facilitator superfamily. Monocarboxylate porter (TC 2.A.1.13) family. Interacts with isoform 2 of BSG; this interaction is required for its localization to the plasma membrane. As to expression, detected in kidney, choroid plexus, testis, lung, stomach, large and small intestine, spleen, fat and parotid gland. In eye, expressed in cornea, ciliary epithelium, lens epithelium and lens fiber.

Its subcellular location is the cell membrane. It localises to the basolateral cell membrane. It carries out the reaction creatine(in) = creatine(out). The enzyme catalyses guanidinoacetate(in) = guanidinoacetate(out). Creatine uptake is inhibited by carbonyl cyanide 3-chlorophenylhydrazone (CCCP) and by valinomycin. Functionally, functions as a transporter for creatine and as well for its precursor guanidinoacetate. Transport of creatine and GAA is independent of resting membrane potential and extracellular Na(+), Cl(-), or pH. Contributes to the process of creatine biosynthesis and distribution. The chain is Monocarboxylate transporter 12 from Rattus norvegicus (Rat).